A 264-amino-acid polypeptide reads, in one-letter code: MKKISGVIMDWAGTAVDYGCFAPLNAFLKVFSEEKGIDITYRQAREPMGLLKIDHIKAILSMPEVNEKFRALYKRDWNKRDVDEMYTSFEKHLFASLKDFTTPIPGVLETMAMLREQGIKIGSTTGYTAKMMEIVRPGAEAKGYRVDNLVTPNEVPAGRPAPYMIYKNMIDLAIPSVDQVVKVGDTIADIKEGVNAKVWSVGIVTGSNEMGVSEEEYNSRPAEEWESLKKEVRERMLAAGAHFVLDTIAELPACIEKINNRDQA.

Residue D10 is the Nucleophile of the active site. Residues D10 and A12 each coordinate Mg(2+). K52 (schiff-base intermediate with substrate) is an active-site residue. D185 serves as a coordination point for Mg(2+).

The protein belongs to the HAD-like hydrolase superfamily. PhnX family. As to quaternary structure, homodimer. Requires Mg(2+) as cofactor.

The enzyme catalyses phosphonoacetaldehyde + H2O = acetaldehyde + phosphate + H(+). Its function is as follows. Involved in phosphonate degradation. The polypeptide is Phosphonoacetaldehyde hydrolase (Parabacteroides distasonis (strain ATCC 8503 / DSM 20701 / CIP 104284 / JCM 5825 / NCTC 11152)).